The following is an 84-amino-acid chain: Cell division topological specificity factor (84 aa).

This sequence belongs to the MinE family.

Its function is as follows. Prevents the cell division inhibition by proteins MinC and MinD at internal division sites while permitting inhibition at polar sites. This ensures cell division at the proper site by restricting the formation of a division septum at the midpoint of the long axis of the cell. The sequence is that of Cell division topological specificity factor from Cupriavidus metallidurans (strain ATCC 43123 / DSM 2839 / NBRC 102507 / CH34) (Ralstonia metallidurans).